The following is a 415-amino-acid chain: Membrane-bound ghrelin O-acyltransferase mboat4 (415 aa).

Over 1-6 (MIDLLW) the chain is Lumenal. Residues 7 to 28 (ISSDGHPQLFYQFINIPFAFLF) traverse the membrane as a helical segment. The Cytoplasmic portion of the chain corresponds to 29–42 (HCLSSQGHLSIINR). Residues 43–58 (YVYLAMGGFMLAIATM) form a helical membrane-spanning segment. Residues 59-61 (GPY) lie on the Lumenal side of the membrane. Residues 62-78 (SSLLFLSAIKLLLLIHY) traverse the membrane as a helical segment. The Cytoplasmic portion of the chain corresponds to 79–84 (IHPMHL). A helical membrane pass occupies residues 85–103 (HRWILGLQMCWQTCWHLYV). Over 104–122 (QYQIYWLQEAPDSRLLLAI) the chain is Lumenal. A helical membrane pass occupies residues 123–138 (SALMLMTQRISSLSLD). The Cytoplasmic segment spans residues 139 to 193 (FQEGTISNQSILIPFLTYSLYFPALLGGPLCSFNAFVQSVERQHTSMTSYLGNLT). A helical membrane pass occupies residues 194–214 (SKISQVIVLVWIKQLFSELLK). At 215-227 (SATFNIDSVCLDV) the chain is on the lumenal side. Residues 228-247 (LWIWIFSLTLRLNYYAHWKM) form a helical membrane-spanning segment. The Cytoplasmic segment spans residues 248–312 (SECVNNAAGL…RKIVFNRTSR (65 aa)). Catalysis depends on residues asparagine 295 and histidine 326. Residues 313–326 (SPLFMTFGFSALWH) form a helical membrane-spanning segment. Over 327–328 (GL) the chain is Lumenal. The chain crosses the membrane as a helical span at residues 329–345 (HPGQILGFLIWAVTVQA). Residues 346-364 (DYKLHRFSHPKLNSLWRKR) lie on the Cytoplasmic side of the membrane. Residues 365-385 (LYVCVNWAFTQLTVACVVVCV) traverse the membrane as a helical segment. The Lumenal portion of the chain corresponds to 386 to 394 (ELQSLASVK). The chain crosses the membrane as a helical span at residues 395 to 415 (LLWSSCIAVFPLLSALILIIL).

It belongs to the membrane-bound acyltransferase family. As to quaternary structure, monomer. Post-translationally, not glycosylated.

It is found in the endoplasmic reticulum membrane. The catalysed reaction is octanoyl-CoA + L-seryl-[protein] = O-octanoyl-L-seryl-[protein] + CoA. It catalyses the reaction decanoyl-CoA + L-seryl-[protein] = O-decanoyl-L-seryl-[protein] + CoA. The enzyme catalyses L-seryl-[protein] + acetyl-CoA = O-acetyl-L-seryl-[protein] + CoA. It carries out the reaction L-seryl-[protein] + butanoyl-CoA = O-butanoyl-L-seryl-[protein] + CoA. The catalysed reaction is pentanoyl-CoA + L-seryl-[protein] = O-pentanoyl-L-seryl-[protein] + CoA. It catalyses the reaction hexanoyl-CoA + L-seryl-[protein] = O-hexanoyl-L-seryl-[protein] + CoA. The enzyme catalyses heptanoyl-CoA + L-seryl-[protein] = O-heptanoyl-L-seryl-[protein] + CoA. It carries out the reaction nonanoyl-CoA + L-seryl-[protein] = O-nonanoyl-L-seryl-[protein] + CoA. The catalysed reaction is L-seryl-[protein] + dodecanoyl-CoA = O-dodecanoyl-L-seryl-[protein] + CoA. It catalyses the reaction L-seryl-[protein] + tetradecanoyl-CoA = O-tetradecanoyl-L-seryl-[protein] + CoA. The enzyme catalyses a fatty acyl-CoA + L-seryl-[protein] = O-fatty acyl-L-seryl-[protein] + CoA. Catalyzes ghrelin acylation at 'Ser-3' using preferentially octanoyl-CoA, hexanoyl-CoA and decanoyl-CoA as acyl-CoA donors leading to ghrelin activity. In vitro uses also acyl-CoA donors of different lengths from short-chain (C2) to long-chain fatty acids (C16) knowing that acyl-CoA donors from butanoyl-CoA (C4) to dodecanoyl-CoA (C12) are more efficient compared to longer acyl-CoA donors, such as myristoyl-CoA (C14) and palmitoyl-CoA (C16) that are not efficient. The polypeptide is Membrane-bound ghrelin O-acyltransferase mboat4 (Danio rerio (Zebrafish)).